We begin with the raw amino-acid sequence, 87 residues long: Gibberellin-regulated protein 8 (87 aa).

The first 25 residues, 1 to 25 (MKLVVVQFFIISLLLTSSFSVLSSA), serve as a signal peptide directing secretion.

It belongs to the GASA family. Post-translationally, six disulfide bonds may be present. In terms of tissue distribution, expressed in roots and developing seeds.

It localises to the secreted. Functionally, gibberellin-regulated protein that may function in hormonal controlled steps of development such as seed germination, flowering and seed maturation. The polypeptide is Gibberellin-regulated protein 8 (Arabidopsis thaliana (Mouse-ear cress)).